A 528-amino-acid polypeptide reads, in one-letter code: Berberine bridge enzyme-like 17 (528 aa).

The signal sequence occupies residues 1 to 19 (MKEVVYVLLLVLLVSVSDA). 4 N-linked (GlcNAc...) asparagine glycosylation sites follow: asparagine 20, asparagine 35, asparagine 52, and asparagine 72. Cysteines 32 and 94 form a disulfide. Positions 69–246 (LNPNDTKLIA…LSWKINLVDV (178 aa)) constitute an FAD-binding PCMH-type domain. A cross-link (6-(S-cysteinyl)-8alpha-(pros-histidyl)-FAD (His-Cys)) is located at residues 109 to 171 (HDYEGLSFTS…KTLAFAGGVC (63 aa)). Residues asparagine 256, asparagine 340, and asparagine 439 are each glycosylated (N-linked (GlcNAc...) asparagine).

The protein belongs to the oxygen-dependent FAD-linked oxidoreductase family. FAD serves as cofactor. The FAD cofactor is bound via a bicovalent 6-S-cysteinyl, 8alpha-N1-histidyl FAD linkage.

The protein resides in the secreted. It is found in the cell wall. The polypeptide is Berberine bridge enzyme-like 17 (Arabidopsis thaliana (Mouse-ear cress)).